We begin with the raw amino-acid sequence, 331 residues long: Adenosine deaminase (331 aa).

Zn(2+) contacts are provided by H12 and H14. Substrate is bound by residues H14, D16, and G170. H197 serves as a coordination point for Zn(2+). Catalysis depends on E200, which acts as the Proton donor. Residue D278 coordinates Zn(2+). A substrate-binding site is contributed by D279.

Belongs to the metallo-dependent hydrolases superfamily. Adenosine and AMP deaminases family. Adenosine deaminase subfamily. The cofactor is Zn(2+).

The enzyme catalyses adenosine + H2O + H(+) = inosine + NH4(+). It catalyses the reaction 2'-deoxyadenosine + H2O + H(+) = 2'-deoxyinosine + NH4(+). Its function is as follows. Catalyzes the hydrolytic deamination of adenosine and 2-deoxyadenosine. This is Adenosine deaminase from Shewanella baltica (strain OS185).